Here is an 83-residue protein sequence, read N- to C-terminus: U20-theraphotoxin-Cg1a 2 (83 aa).

Positions Met1–Ala21 are cleaved as a signal peptide. Positions Ala22–Arg47 are excised as a propeptide. Disulfide bonds link Cys49-Cys63, Cys56-Cys68, and Cys62-Cys76.

The protein belongs to the neurotoxin 10 (Hwtx-1) family. 40 (Jztx-35) subfamily. Expressed by the venom gland.

It is found in the secreted. Functionally, probable ion channel inhibitor. This is U20-theraphotoxin-Cg1a 2 from Chilobrachys guangxiensis (Chinese earth tiger tarantula).